The following is a 423-amino-acid chain: MLDTLLINIGQLLTMDQEDGLLRREAMNTLPVIENGAVGIENGVITFVGTAEEAKGLQAKEVIDCGGKMVSPGLVDPHTHLVFGGSRENEIALKLQGVPYLEILEQGGGILSTVNATKQASKEELVQKAKFHLDRMLSFGVTTVEAKSGYGLDDETEWKQLEATAQLQKEHPIDLVSTFLGAHAVPKEYKGRSKEFLQWMLDLLPEMKEKQLAEFVDIFCETGVFSVEESKEFLLKAKELGFDVKIHADEIDPLGGAEAAAEIGAASADHLVGASDKGIEMLANSNTVATLLPGTTFYLNKESFARGRKMIDEGVAVALATDFNPGSCPTENIQLIMSIAMLKLKMTPEEVWNAVTVNSSYAINRGDVAGKIRVGRKADLVLWDAYNYAYVPYHYGVSHVNTVWKNGNIAYTRGEQSWSTATI.

Residues H78 and H80 each contribute to the Fe(3+) site. The Zn(2+) site is built by H78 and H80. Residues R87, Y150, and H183 each contribute to the 4-imidazolone-5-propanoate site. N-formimidoyl-L-glutamate is bound at residue Y150. H247 provides a ligand contact to Fe(3+). H247 is a Zn(2+) binding site. Residue E250 coordinates 4-imidazolone-5-propanoate. Fe(3+) is bound at residue D322. Zn(2+) is bound at residue D322. Residues N324 and G326 each contribute to the N-formimidoyl-L-glutamate site. Residue S327 participates in 4-imidazolone-5-propanoate binding.

It belongs to the metallo-dependent hydrolases superfamily. HutI family. It depends on Zn(2+) as a cofactor. The cofactor is Fe(3+).

The protein resides in the cytoplasm. The enzyme catalyses 4-imidazolone-5-propanoate + H2O = N-formimidoyl-L-glutamate. It functions in the pathway amino-acid degradation; L-histidine degradation into L-glutamate; N-formimidoyl-L-glutamate from L-histidine: step 3/3. In terms of biological role, catalyzes the hydrolytic cleavage of the carbon-nitrogen bond in imidazolone-5-propanoate to yield N-formimidoyl-L-glutamate. It is the third step in the universal histidine degradation pathway. This Bacillus anthracis (strain A0248) protein is Imidazolonepropionase.